The following is a 78-amino-acid chain: Neurotoxin 3FTx-LK (78 aa).

The first 21 residues, 1-21 (MKTLLLTLVVVTIVCLDLGYT), serve as a signal peptide directing secretion. Intrachain disulfides connect Cys24–Cys42, Cys35–Cys60, Cys64–Cys70, and Cys71–Cys76.

Expressed by the venom gland.

The protein localises to the secreted. In terms of biological role, blocks both the muscle-twitch response to nerve stimulation and the response to exogenous acetylcholine. The protein is Neurotoxin 3FTx-LK of Bungarus fasciatus (Banded krait).